We begin with the raw amino-acid sequence, 167 residues long: Zinc finger CCCH domain-containing protein 3 (167 aa).

The C3H1-type zinc finger occupies 63–91 (AAAIGVCQHFVRTGTCKFGDSCRYFHPKP). The span at 89 to 101 (PKPPPANPGPAPS) shows a compositional bias: pro residues. Residues 89-167 (PKPPPANPGP…YPPFPFVDWG (79 aa)) are disordered. Polar residues predominate over residues 108-120 (MAQQSNIQGSQPN). Residues 149 to 167 (SLRPPPEGGYPPFPFVDWG) show a composition bias toward pro residues.

This Oryza sativa subsp. japonica (Rice) protein is Zinc finger CCCH domain-containing protein 3.